Here is a 447-residue protein sequence, read N- to C-terminus: Tubulin beta chain (447 aa).

Residues glutamine 11, glutamate 69, serine 138, glycine 142, threonine 143, glycine 144, asparagine 204, and asparagine 226 each coordinate GTP. Glutamate 69 lines the Mg(2+) pocket. Residues 424 to 447 (QYQEASVSDAEEEYDEEAPLEGEE) form a disordered region. Acidic residues predominate over residues 432–447 (DAEEEYDEEAPLEGEE).

Belongs to the tubulin family. Dimer of alpha and beta chains. A typical microtubule is a hollow water-filled tube with an outer diameter of 25 nm and an inner diameter of 15 nM. Alpha-beta heterodimers associate head-to-tail to form protofilaments running lengthwise along the microtubule wall with the beta-tubulin subunit facing the microtubule plus end conferring a structural polarity. Microtubules usually have 13 protofilaments but different protofilament numbers can be found in some organisms and specialized cells. Requires Mg(2+) as cofactor.

The protein localises to the cytoplasm. Its subcellular location is the cytoskeleton. Its function is as follows. Tubulin is the major constituent of microtubules, a cylinder consisting of laterally associated linear protofilaments composed of alpha- and beta-tubulin heterodimers. Microtubules grow by the addition of GTP-tubulin dimers to the microtubule end, where a stabilizing cap forms. Below the cap, tubulin dimers are in GDP-bound state, owing to GTPase activity of alpha-tubulin. The sequence is that of Tubulin beta chain (TUB1) from Zymoseptoria tritici (Speckled leaf blotch fungus).